The sequence spans 361 residues: 5-exo-hydroxycamphor dehydrogenase (361 aa).

6 residues coordinate Zn(2+): Cys40, His62, Cys98, Cys101, Cys104, and Cys170.

It belongs to the zinc-containing alcohol dehydrogenase family. It depends on Zn(2+) as a cofactor.

The catalysed reaction is (1R,4R,5R)-5-hydroxycamphor + NAD(+) = (1R,4R)-bornane-2,5-dione + NADH + H(+). It functions in the pathway terpene metabolism; (R)-camphor degradation. In Pseudomonas putida (Arthrobacter siderocapsulatus), this protein is 5-exo-hydroxycamphor dehydrogenase (camD).